Here is a 592-residue protein sequence, read N- to C-terminus: E3 ubiquitin-protein ligase RNF180 (592 aa).

Topologically, residues 1–564 (MKRSEESTST…DSRGWWFDMD (564 aa)) are cytoplasmic. Serine 231 bears the Phosphoserine mark. The tract at residues 282 to 489 (QSPPSFDPNM…VFLQTELNNA (208 aa)) is interaction with ZIC2. The RING-type zinc finger occupies 432-474 (CAVCLDVYFNPYMCYPCHHIFCEPCLRTLAKDNPASTPCPLCR). The chain crosses the membrane as a helical span at residues 565 to 585 (MVIIYIYSVNWVIGFVVFCFL). Residues 586-592 (CYFFFPF) lie on the Extracellular side of the membrane.

Interacts with ZIC2. As to expression, brain, kidney, testis and uterus. membrane protein. Nucleus envelope.

Its subcellular location is the endoplasmic reticulum membrane. It localises to the nucleus envelope. It catalyses the reaction S-ubiquitinyl-[E2 ubiquitin-conjugating enzyme]-L-cysteine + [acceptor protein]-L-lysine = [E2 ubiquitin-conjugating enzyme]-L-cysteine + N(6)-ubiquitinyl-[acceptor protein]-L-lysine.. It functions in the pathway protein modification; protein ubiquitination. Its function is as follows. E3 ubiquitin-protein ligase which promotes polyubiquitination and degradation by the proteasome pathway of ZIC2. This is E3 ubiquitin-protein ligase RNF180 (Rnf180) from Mus musculus (Mouse).